The following is a 245-amino-acid chain: 1-(5-phosphoribosyl)-5-[(5-phosphoribosylamino)methylideneamino] imidazole-4-carboxamide isomerase (245 aa).

Asp-7 (proton acceptor) is an active-site residue. Residue Asp-129 is the Proton donor of the active site.

This sequence belongs to the HisA/HisF family.

It localises to the cytoplasm. It carries out the reaction 1-(5-phospho-beta-D-ribosyl)-5-[(5-phospho-beta-D-ribosylamino)methylideneamino]imidazole-4-carboxamide = 5-[(5-phospho-1-deoxy-D-ribulos-1-ylimino)methylamino]-1-(5-phospho-beta-D-ribosyl)imidazole-4-carboxamide. The protein operates within amino-acid biosynthesis; L-histidine biosynthesis; L-histidine from 5-phospho-alpha-D-ribose 1-diphosphate: step 4/9. In Edwardsiella ictaluri (strain 93-146), this protein is 1-(5-phosphoribosyl)-5-[(5-phosphoribosylamino)methylideneamino] imidazole-4-carboxamide isomerase.